Reading from the N-terminus, the 244-residue chain is 7-cyano-7-deazaguanine synthase (244 aa).

14 to 24 (FSGGQDSATCV) lines the ATP pocket. Zn(2+) contacts are provided by C202, C217, C220, and C223.

This sequence belongs to the QueC family. It depends on Zn(2+) as a cofactor.

The enzyme catalyses 7-carboxy-7-deazaguanine + NH4(+) + ATP = 7-cyano-7-deazaguanine + ADP + phosphate + H2O + H(+). The protein operates within purine metabolism; 7-cyano-7-deazaguanine biosynthesis. Functionally, catalyzes the ATP-dependent conversion of 7-carboxy-7-deazaguanine (CDG) to 7-cyano-7-deazaguanine (preQ(0)). This is 7-cyano-7-deazaguanine synthase from Burkholderia multivorans (strain ATCC 17616 / 249).